The sequence spans 236 residues: Ribosome maturation protein SDO1 homolog (236 aa).

This sequence belongs to the SDO1/SBDS family.

This is Ribosome maturation protein SDO1 homolog from Pyrococcus abyssi (strain GE5 / Orsay).